A 722-amino-acid chain; its full sequence is Peroxisomal bifunctional enzyme (722 aa).

The segment at 1 to 281 is enoyl-CoA hydratase / isomerase; that stretch reads MAEYLRLPHS…FAEKSANKWS (281 aa). Alanine 2 is modified (blocked amino end (Ala)). Lysine 38 is subject to N6-succinyllysine. Glycine 100 provides a ligand contact to substrate. Lysine 173 bears the N6-acetyllysine; alternate mark. N6-succinyllysine; alternate is present on lysine 173. Lysine 182 carries the N6-succinyllysine modification. Lysine 190 and lysine 218 each carry N6-acetyllysine; alternate. N6-succinyllysine; alternate occurs at positions 190 and 218. Lysine 241 carries the N6-succinyllysine modification. Lysine 249 carries the N6-acetyllysine modification. Residue lysine 253 is modified to N6-succinyllysine. Lysine 275 is modified (N6-acetyllysine; alternate). N6-succinyllysine; alternate is present on lysine 275. An N6-succinyllysine mark is found at lysine 279, lysine 289, and lysine 330. A 3-hydroxyacyl-CoA dehydrogenase region spans residues 282-571; that stretch reads TPSGASWKTA…DMLCEAGRFG (290 aa). 3 positions are modified to N6-acetyllysine: lysine 345, lysine 359, and lysine 463. The residue at position 531 (lysine 531) is an N6-succinyllysine. A Phosphothreonine modification is found at threonine 547. An N6-succinyllysine modification is found at lysine 576. Lysine 583, lysine 590, and lysine 709 each carry N6-acetyllysine; alternate. An N6-succinyllysine; alternate mark is found at lysine 583, lysine 590, and lysine 709. A Microbody targeting signal motif is present at residues 720–722; the sequence is SKL. At lysine 721 the chain carries N6-succinyllysine.

This sequence in the N-terminal section; belongs to the enoyl-CoA hydratase/isomerase family. It in the C-terminal section; belongs to the 3-hydroxyacyl-CoA dehydrogenase family. Monomer. In terms of processing, acetylated, leading to enhanced enzyme activity. Acetylation is enhanced by up to 80% after treatment either with trichostin A (TCA) or with nicotinamide (NAM) with highest increase on Lys-345. Acetylation and enzyme activity increased by about 1.5% on addition of fatty acids.

Its subcellular location is the peroxisome. The enzyme catalyses a (3S)-3-hydroxyacyl-CoA = a (2E)-enoyl-CoA + H2O. It carries out the reaction a 4-saturated-(3S)-3-hydroxyacyl-CoA = a (3E)-enoyl-CoA + H2O. The catalysed reaction is a (3Z)-enoyl-CoA = a 4-saturated (2E)-enoyl-CoA. It catalyses the reaction a (3E)-enoyl-CoA = a 4-saturated (2E)-enoyl-CoA. The enzyme catalyses a (3S)-3-hydroxyacyl-CoA + NAD(+) = a 3-oxoacyl-CoA + NADH + H(+). It carries out the reaction (2S,3S)-3-hydroxy-2-methylbutanoyl-CoA = (2E)-2-methylbut-2-enoyl-CoA + H2O. The catalysed reaction is (3E,5Z)-tetradecadienoyl-CoA = (2E,5Z)-tetradecadienoyl-CoA. It catalyses the reaction (3E,5Z)-octadienoyl-CoA = (2E,5Z)-octadienoyl-CoA. The enzyme catalyses (3S)-hydroxydecanoyl-CoA + NAD(+) = 3-oxodecanoyl-CoA + NADH + H(+). It carries out the reaction (3E)-decenoyl-CoA = (2E)-decenoyl-CoA. The catalysed reaction is (3Z)-hexenoyl-CoA = (2E)-hexenoyl-CoA. It catalyses the reaction (3E)-hexenoyl-CoA = (2E)-hexenoyl-CoA. The enzyme catalyses (3S)-hydroxydecanoyl-CoA = (2E)-decenoyl-CoA + H2O. It carries out the reaction (3S)-hydroxyhexanoyl-CoA = (2E)-hexenoyl-CoA + H2O. The catalysed reaction is (3S)-hydroxyhexadecanoyl-CoA + NAD(+) = 3-oxohexadecanoyl-CoA + NADH + H(+). It catalyses the reaction (3S)-hydroxyhexadecanoyl-CoA = (2E)-hexadecenoyl-CoA + H2O. The enzyme catalyses (2E)-hexadecenedioyl-CoA + H2O = (3S)-hydroxyhexadecanedioyl-CoA. It carries out the reaction (3S)-hydroxyhexadecanedioyl-CoA + NAD(+) = 3-oxohexadecanedioyl-CoA + NADH + H(+). It functions in the pathway lipid metabolism; fatty acid beta-oxidation. Its activity is regulated as follows. Enzyme activity enhanced by acetylation. Its function is as follows. Peroxisomal trifunctional enzyme possessing 2-enoyl-CoA hydratase, 3-hydroxyacyl-CoA dehydrogenase, and delta 3, delta 2-enoyl-CoA isomerase activities. Catalyzes two of the four reactions of the long chain fatty acids peroxisomal beta-oxidation pathway. Can also use branched-chain fatty acids such as 2-methyl-2E-butenoyl-CoA as a substrate, which is hydrated into (2S,3S)-3-hydroxy-2-methylbutanoyl-CoA. Optimal isomerase for 2,5 double bonds into 3,5 form isomerization in a range of enoyl-CoA species. Also able to isomerize both 3-cis and 3-trans double bonds into the 2-trans form in a range of enoyl-CoA species. Regulates the amount of medium-chain dicarboxylic fatty acids which are essential regulators of all fatty acid oxidation pathways. Also involved in the degradation of long-chain dicarboxylic acids through peroxisomal beta-oxidation. This Rattus norvegicus (Rat) protein is Peroxisomal bifunctional enzyme.